The sequence spans 81 residues: Delta-actitoxin-Aeq2d (81 aa).

Residues 1–19 form the signal peptide; sequence MNRLMILVFAAVILALASA. A propeptide spanning residues 20–25 is cleaved from the precursor; that stretch reads DDVDIA. 3 disulfide bridges follow: Cys31–Cys78, Cys33–Cys68, and Cys61–Cys79.

Belongs to the sea anemone sodium channel inhibitory toxin family. Type I subfamily.

The protein resides in the secreted. It is found in the nematocyst. Its function is as follows. Binds specifically to voltage-gated sodium channels (Nav), thereby delaying their inactivation during signal transduction. Causes death to crabs. The chain is Delta-actitoxin-Aeq2d from Actinia equina (Beadlet anemone).